A 323-amino-acid polypeptide reads, in one-letter code: Protein translocase subunit SecF (323 aa).

The next 6 membrane-spanning stretches (helical) occupy residues 19–39 (GVIV…FKGF), 138–158 (ILSL…RYEW), 162–182 (LASV…VIVF), 189–209 (EVIA…IIIF), 244–264 (LTVF…IIGF), and 269–289 (LIGT…VALL).

This sequence belongs to the SecD/SecF family. SecF subfamily. In terms of assembly, forms a complex with SecD. Part of the essential Sec protein translocation apparatus which comprises SecA, SecYEG and auxiliary proteins SecDF-YajC and YidC.

It is found in the cell inner membrane. In terms of biological role, part of the Sec protein translocase complex. Interacts with the SecYEG preprotein conducting channel. SecDF uses the proton motive force (PMF) to complete protein translocation after the ATP-dependent function of SecA. The sequence is that of Protein translocase subunit SecF from Helicobacter pylori (strain ATCC 700392 / 26695) (Campylobacter pylori).